The chain runs to 344 residues: N-acetyl-gamma-glutamyl-phosphate reductase (344 aa).

Residue Cys148 is part of the active site.

This sequence belongs to the NAGSA dehydrogenase family. Type 1 subfamily.

The protein localises to the cytoplasm. The catalysed reaction is N-acetyl-L-glutamate 5-semialdehyde + phosphate + NADP(+) = N-acetyl-L-glutamyl 5-phosphate + NADPH + H(+). Its pathway is amino-acid biosynthesis; L-arginine biosynthesis; N(2)-acetyl-L-ornithine from L-glutamate: step 3/4. In terms of biological role, catalyzes the NADPH-dependent reduction of N-acetyl-5-glutamyl phosphate to yield N-acetyl-L-glutamate 5-semialdehyde. The polypeptide is N-acetyl-gamma-glutamyl-phosphate reductase (Clostridium kluyveri (strain NBRC 12016)).